Here is a 304-residue protein sequence, read N- to C-terminus: Thyroxine 5-deiodinase (304 aa).

The segment at 1 to 22 (MPRQAASRLVVGEGEGPPGASG) is disordered. Over 1-44 (MPRQAASRLVVGEGEGPPGASGPAATMLRSLLLHSLRLCAQTAS) the chain is Cytoplasmic. A helical; Signal-anchor for type II membrane protein membrane pass occupies residues 45–67 (CLVLFPRFLGTAFMLWLLDFLCI). At 68-304 (RKHFLRRRHP…QLHGTRPHRF (237 aa)) the chain is on the extracellular side. Selenocysteine 170 is an active-site residue. Position 170 (selenocysteine 170) is a non-standard amino acid, selenocysteine.

Belongs to the iodothyronine deiodinase family. As to quaternary structure, monomer. Homodimer. May undergo minor heretodimerization with DIO1 and DIO2.

It localises to the cell membrane. Its subcellular location is the endosome membrane. The enzyme catalyses 3,3',5'-triiodo-L-thyronine + iodide + A + H(+) = L-thyroxine + AH2. It catalyses the reaction 3,3'-diiodo-L-thyronine + iodide + A + H(+) = 3,3',5-triiodo-L-thyronine + AH2. It carries out the reaction 3-iodo-L-thyronine + iodide + A + H(+) = 3,5-diiodo-L-thyronine + AH2. The catalysed reaction is L-thyronine + iodide + A + H(+) = 3-iodo-L-thyronine + AH2. The enzyme catalyses 3',5'-diiodo-L-thyronine + iodide + A + H(+) = 3,3',5'-triiodo-L-thyronine + AH2. It catalyses the reaction 3'-iodo-L-thyronine + iodide + A + H(+) = 3,3'-diiodo-L-thyronine + AH2. It carries out the reaction 3,3',5'-triiodothyronamine + iodide + A + H(+) = 3,3',5,5'-tetraiodothyronamine + AH2. The catalysed reaction is 3',5'-diiodothyronamine + iodide + A + H(+) = 3,3',5'-triiodothyronamine + AH2. The enzyme catalyses 3,3'-diiodothyronamine + iodide + A + H(+) = 3,3',5-triiodothyronamine + AH2. It catalyses the reaction 3-iodothyronamine + iodide + A + H(+) = 3,5-diiodothyronamine + AH2. It carries out the reaction 3'-iodothyronamine + iodide + A + H(+) = 3,3'-diiodothyronamine + AH2. The catalysed reaction is thyronamine + iodide + A + H(+) = 3-iodothyronamine + AH2. Functionally, plays a crucial role in the metabolism of thyroid hormones (TH) and has specific roles in TH activation and inactivation by deiodination. Catalyzes the deiodination of L-thyroxine (T4) to 3,3',5'-triiodothyronine (rT3), 3,5,3'-triiodothyronine (T3) to 3,3'-diiodothyronine (3,3'-T2), 3,5-diiodothyronine (3,5-T2) to 3-monoiodothyronine (3-T1), rT3 to 3',5'-diiodothyronine (3',5'-T2) and 3,3'-T2 to 3'-monoiodothyronine (3'-T1) via inner-ring deiodination (IRD). Catalyzes the deiodination of 3-T1 to L-thyronine (T0) via outer-ring deiodination (ORD). Catalyzes the tyrosyl ring deiodinations of 3,3',5,5'-tetraiodothyronamine, 3,3',5'-triiodothyronamine, 3,5,3'-triiodothyronamine, 3,5-diiodothyronamine, 3,3'-diiodothyronamine and 3-iodothyronamine. This Mus musculus (Mouse) protein is Thyroxine 5-deiodinase (Dio3).